The sequence spans 541 residues: MTRFIFITGGVVSSLGKGLASAALGALLQARGFKVRLRKLDPYLNVDPGTMSPYQHGEVYVTDDGAETDLDLGHYERFTGVPSRKSDNITTGRIYSNVIAKERRGDYLGATVQVIPHVTDAIKEFVKSDLTDEDFCLCEIGGTVGDIESLPFLEAIRQLGNELGRARTMFVHLTLVPYIPSAGELKTKPTQHSVKELLSVGIQPDMLMCRCDREIPEGDRRKIALFCNVAPDAVIPALDVDSIYQVPISYHEQGMDAVVCRHFGLDAPLPDLKRWSTIVDRIRQPEGEVTIAIVGKYISLLDSYKSLAEALHHGGIANNVKVNLNWIDSQIFEQGDVVQHLEPCDGILVPGGFGERGAFGKVEAVRFARERKVPYFGICFGMQMAVIEAARNLAGYKDASSTEFGPCDNPVVGLMTEWMKGNMLEKRAASGDLGGTMRLGAYECDLKQGSRVREIYGQGRISERHRHRYEVNMGYRADLEKTGLSFSGLSPDGVLPEIVEIPDHPWFVGVQFHPELKSKPFDPHPLFTSFIAAAVRQSRLV.

An amidoligase domain region spans residues 1 to 265; it reads MTRFIFITGG…DAVVCRHFGL (265 aa). Serine 13 serves as a coordination point for CTP. Serine 13 contacts UTP. 14–19 contributes to the ATP binding site; that stretch reads SLGKGL. Tyrosine 54 lines the L-glutamine pocket. Aspartate 71 serves as a coordination point for ATP. Residues aspartate 71 and glutamate 139 each contribute to the Mg(2+) site. Residues 146 to 148, 186 to 191, and lysine 222 each bind CTP; these read DIE and KTKPTQ. UTP-binding positions include 186–191 and lysine 222; that span reads KTKPTQ. The 251-residue stretch at 290–540 folds into the Glutamine amidotransferase type-1 domain; it reads TIAIVGKYIS…IAAAVRQSRL (251 aa). Glycine 352 provides a ligand contact to L-glutamine. The active-site Nucleophile; for glutamine hydrolysis is cysteine 379. L-glutamine-binding positions include 380–383, glutamate 403, and arginine 468; that span reads FGMQ. Active-site residues include histidine 513 and glutamate 515.

The protein belongs to the CTP synthase family. Homotetramer.

The catalysed reaction is UTP + L-glutamine + ATP + H2O = CTP + L-glutamate + ADP + phosphate + 2 H(+). It catalyses the reaction L-glutamine + H2O = L-glutamate + NH4(+). It carries out the reaction UTP + NH4(+) + ATP = CTP + ADP + phosphate + 2 H(+). It participates in pyrimidine metabolism; CTP biosynthesis via de novo pathway; CTP from UDP: step 2/2. With respect to regulation, allosterically activated by GTP, when glutamine is the substrate; GTP has no effect on the reaction when ammonia is the substrate. The allosteric effector GTP functions by stabilizing the protein conformation that binds the tetrahedral intermediate(s) formed during glutamine hydrolysis. Inhibited by the product CTP, via allosteric rather than competitive inhibition. Catalyzes the ATP-dependent amination of UTP to CTP with either L-glutamine or ammonia as the source of nitrogen. Regulates intracellular CTP levels through interactions with the four ribonucleotide triphosphates. This is CTP synthase from Paramagnetospirillum magneticum (strain ATCC 700264 / AMB-1) (Magnetospirillum magneticum).